Consider the following 188-residue polypeptide: Peptidyl-tRNA hydrolase (188 aa).

Tyr-16 serves as a coordination point for tRNA. His-21 (proton acceptor) is an active-site residue. TRNA-binding residues include Phe-66, Asn-68, and Asn-114.

The protein belongs to the PTH family. In terms of assembly, monomer.

The protein localises to the cytoplasm. The catalysed reaction is an N-acyl-L-alpha-aminoacyl-tRNA + H2O = an N-acyl-L-amino acid + a tRNA + H(+). In terms of biological role, hydrolyzes ribosome-free peptidyl-tRNAs (with 1 or more amino acids incorporated), which drop off the ribosome during protein synthesis, or as a result of ribosome stalling. Catalyzes the release of premature peptidyl moieties from peptidyl-tRNA molecules trapped in stalled 50S ribosomal subunits, and thus maintains levels of free tRNAs and 50S ribosomes. This is Peptidyl-tRNA hydrolase from Citrifermentans bemidjiense (strain ATCC BAA-1014 / DSM 16622 / JCM 12645 / Bem) (Geobacter bemidjiensis).